Here is a 293-residue protein sequence, read N- to C-terminus: NAD kinase (293 aa).

The active-site Proton acceptor is the aspartate 73. NAD(+) contacts are provided by residues 73–74 (DG), histidine 78, 147–148 (ND), arginine 158, arginine 175, aspartate 177, 188–193 (TAYALS), and glutamine 248.

It belongs to the NAD kinase family. A divalent metal cation is required as a cofactor.

It localises to the cytoplasm. The enzyme catalyses NAD(+) + ATP = ADP + NADP(+) + H(+). Involved in the regulation of the intracellular balance of NAD and NADP, and is a key enzyme in the biosynthesis of NADP. Catalyzes specifically the phosphorylation on 2'-hydroxyl of the adenosine moiety of NAD to yield NADP. The sequence is that of NAD kinase from Nitrosococcus oceani (strain ATCC 19707 / BCRC 17464 / JCM 30415 / NCIMB 11848 / C-107).